The sequence spans 194 residues: MPVARSWVCRKTYVTPRRPFEKSRLDQELKLIGEYGLRNKREVWRVKFTLAKIRKAARELLTLDEKDPRRLFEGNALLRRLVRIGVLDEGKMKLDYILGLKIEDFLERRLQTQVFKLGLAKSIHHARVLIRQRHIRVRKQVVNIPSFIVRLDSQKHIDFSLRSPYGGGRPGRVKRKNAKKGQGGAGAGDDEEED.

N6-acetyllysine is present on Lys-66. Lys-93 participates in a covalent cross-link: Glycyl lysine isopeptide (Lys-Gly) (interchain with G-Cter in SUMO2). An S4 RNA-binding domain is found at 108 to 182 (RRLQTQVFKL…VKRKNAKKGQ (75 aa)). Lys-116 carries the N6-acetyllysine modification. Lys-139 participates in a covalent cross-link: Glycyl lysine isopeptide (Lys-Gly) (interchain with G-Cter in SUMO2). The residue at position 153 (Ser-153) is a Phosphoserine. Residue Lys-155 is modified to N6-acetyllysine. Residues 162–194 (RSPYGGGRPGRVKRKNAKKGQGGAGAGDDEEED) are disordered. Ser-163 is modified (phosphoserine).

It belongs to the universal ribosomal protein uS4 family. In terms of assembly, component of the small ribosomal subunit. Part of the small subunit (SSU) processome, composed of more than 70 proteins and the RNA chaperone small nucleolar RNA (snoRNA) U3.

The protein resides in the cytoplasm. Its subcellular location is the nucleus. It localises to the nucleolus. Component of the small ribosomal subunit. The ribosome is a large ribonucleoprotein complex responsible for the synthesis of proteins in the cell. Part of the small subunit (SSU) processome, first precursor of the small eukaryotic ribosomal subunit. During the assembly of the SSU processome in the nucleolus, many ribosome biogenesis factors, an RNA chaperone and ribosomal proteins associate with the nascent pre-rRNA and work in concert to generate RNA folding, modifications, rearrangements and cleavage as well as targeted degradation of pre-ribosomal RNA by the RNA exosome. The protein is Small ribosomal subunit protein uS4 (RPS9) of Papio anubis (Olive baboon).